The chain runs to 233 residues: Antigenic membrane protein (233 aa).

The first 32 residues, Met-1–Ala-32, serve as a signal peptide directing secretion. A helical membrane pass occupies residues Phe-206–Val-226.

It is found in the cell membrane. The sequence is that of Antigenic membrane protein (amp) from Onion yellows phytoplasma (strain OY-M).